The primary structure comprises 164 residues: ATP synthase subunit b (164 aa).

The chain crosses the membrane as a helical span at residues 6–26; that stretch reads GELVGNFILVTGSVIVLLLLI.

It belongs to the ATPase B chain family. F-type ATPases have 2 components, F(1) - the catalytic core - and F(0) - the membrane proton channel. F(1) has five subunits: alpha(3), beta(3), gamma(1), delta(1), epsilon(1). F(0) has three main subunits: a(1), b(2) and c(10-14). The alpha and beta chains form an alternating ring which encloses part of the gamma chain. F(1) is attached to F(0) by a central stalk formed by the gamma and epsilon chains, while a peripheral stalk is formed by the delta and b chains.

The protein resides in the cell membrane. Functionally, f(1)F(0) ATP synthase produces ATP from ADP in the presence of a proton or sodium gradient. F-type ATPases consist of two structural domains, F(1) containing the extramembraneous catalytic core and F(0) containing the membrane proton channel, linked together by a central stalk and a peripheral stalk. During catalysis, ATP synthesis in the catalytic domain of F(1) is coupled via a rotary mechanism of the central stalk subunits to proton translocation. Its function is as follows. Component of the F(0) channel, it forms part of the peripheral stalk, linking F(1) to F(0). The chain is ATP synthase subunit b from Streptococcus pyogenes serotype M1.